The primary structure comprises 241 residues: Triosephosphate isomerase (241 aa).

9-11 (NWK) contributes to the substrate binding site. Histidine 96 acts as the Electrophile in catalysis. Catalysis depends on glutamate 165, which acts as the Proton acceptor. Substrate-binding positions include glycine 171, serine 204, and 225–226 (GG).

The protein belongs to the triosephosphate isomerase family. Homodimer.

The protein resides in the cytoplasm. It carries out the reaction D-glyceraldehyde 3-phosphate = dihydroxyacetone phosphate. Its pathway is carbohydrate biosynthesis; gluconeogenesis. It functions in the pathway carbohydrate degradation; glycolysis; D-glyceraldehyde 3-phosphate from glycerone phosphate: step 1/1. Its function is as follows. Involved in the gluconeogenesis. Catalyzes stereospecifically the conversion of dihydroxyacetone phosphate (DHAP) to D-glyceraldehyde-3-phosphate (G3P). The sequence is that of Triosephosphate isomerase from Acaryochloris marina (strain MBIC 11017).